Consider the following 118-residue polypeptide: Beta-2-microglobulin (118 aa).

Residues 1 to 20 (MAVSAALVLLGLLSLSGLDA) form the signal peptide. The region spanning 25-112 (PEVQVYSRHP…HVTLTQPKIV (88 aa)) is the Ig-like C1-type domain. Cys45 and Cys99 are joined by a disulfide.

It belongs to the beta-2-microglobulin family. In terms of assembly, heterodimer of an alpha chain and a beta chain. Beta-2-microglobulin is the beta-chain of major histocompatibility complex class I molecules.

It is found in the secreted. Component of the class I major histocompatibility complex (MHC). Involved in the presentation of peptide antigens to the immune system. The sequence is that of Beta-2-microglobulin (B2M) from Ovis aries (Sheep).